The following is a 243-amino-acid chain: tRNA (guanine-N(1)-)-methyltransferase (243 aa).

Residues glycine 108 and 127 to 132 contribute to the S-adenosyl-L-methionine site; that span reads LGDFVL.

It belongs to the RNA methyltransferase TrmD family. In terms of assembly, homodimer.

The protein resides in the cytoplasm. The catalysed reaction is guanosine(37) in tRNA + S-adenosyl-L-methionine = N(1)-methylguanosine(37) in tRNA + S-adenosyl-L-homocysteine + H(+). Functionally, specifically methylates guanosine-37 in various tRNAs. This chain is tRNA (guanine-N(1)-)-methyltransferase, found in Streptococcus equi subsp. zooepidemicus (strain H70).